Here is a 352-residue protein sequence, read N- to C-terminus: Phospho-N-acetylmuramoyl-pentapeptide-transferase (352 aa).

Helical transmembrane passes span 16–36 (YITFRAGAAFFIAFFLALLFM), 66–86 (TPTMGGLVFIGATLLASLLCA), 88–108 (LNNLYVLAGLAVILLFGLIGL), 129–149 (MLYLVLAGASVSAALFYFGME), 160–180 (PLLSMGIVAILFWTLVMVATS), 191–211 (GLATVPSVYALVSLSVFVYIA), 228–248 (SGEAVIVSAALVGALIGFLWF), 255–275 (LFMGDSGSLSIGGFIAYMAII), 280–300 (FLLFLIGSIFVIETVSVILQI), and 329–349 (KIIVRFWIIALMSNIIALLTL).

It belongs to the glycosyltransferase 4 family. MraY subfamily. It depends on Mg(2+) as a cofactor.

The protein resides in the cell inner membrane. The enzyme catalyses UDP-N-acetyl-alpha-D-muramoyl-L-alanyl-gamma-D-glutamyl-meso-2,6-diaminopimeloyl-D-alanyl-D-alanine + di-trans,octa-cis-undecaprenyl phosphate = di-trans,octa-cis-undecaprenyl diphospho-N-acetyl-alpha-D-muramoyl-L-alanyl-D-glutamyl-meso-2,6-diaminopimeloyl-D-alanyl-D-alanine + UMP. Its pathway is cell wall biogenesis; peptidoglycan biosynthesis. In terms of biological role, catalyzes the initial step of the lipid cycle reactions in the biosynthesis of the cell wall peptidoglycan: transfers peptidoglycan precursor phospho-MurNAc-pentapeptide from UDP-MurNAc-pentapeptide onto the lipid carrier undecaprenyl phosphate, yielding undecaprenyl-pyrophosphoryl-MurNAc-pentapeptide, known as lipid I. The sequence is that of Phospho-N-acetylmuramoyl-pentapeptide-transferase from Wolinella succinogenes (strain ATCC 29543 / DSM 1740 / CCUG 13145 / JCM 31913 / LMG 7466 / NCTC 11488 / FDC 602W) (Vibrio succinogenes).